A 416-amino-acid chain; its full sequence is Serine hydroxymethyltransferase (416 aa).

(6S)-5,6,7,8-tetrahydrofolate is bound by residues Leu-121 and 125-127 (GHL). Residue Lys-230 is modified to N6-(pyridoxal phosphate)lysine.

The protein belongs to the SHMT family. As to quaternary structure, homodimer. Pyridoxal 5'-phosphate is required as a cofactor.

Its subcellular location is the cytoplasm. It carries out the reaction (6R)-5,10-methylene-5,6,7,8-tetrahydrofolate + glycine + H2O = (6S)-5,6,7,8-tetrahydrofolate + L-serine. Its pathway is one-carbon metabolism; tetrahydrofolate interconversion. The protein operates within amino-acid biosynthesis; glycine biosynthesis; glycine from L-serine: step 1/1. Catalyzes the reversible interconversion of serine and glycine with tetrahydrofolate (THF) serving as the one-carbon carrier. This reaction serves as the major source of one-carbon groups required for the biosynthesis of purines, thymidylate, methionine, and other important biomolecules. Also exhibits THF-independent aldolase activity toward beta-hydroxyamino acids, producing glycine and aldehydes, via a retro-aldol mechanism. The sequence is that of Serine hydroxymethyltransferase from Nitrosomonas eutropha (strain DSM 101675 / C91 / Nm57).